The chain runs to 256 residues: Metallo-beta-lactamase type 2 (256 aa).

A signal peptide spans 1–29; it reads MKNTLLKLGVCVSLLGITPFVSTISSVQA. Residues H115, H117, D119, H178, and C197 each coordinate Zn(2+). The substrate site is built by K200 and N209. Residue H239 coordinates Zn(2+).

This sequence belongs to the metallo-beta-lactamase superfamily. Class-B beta-lactamase family. Monomer. Requires Zn(2+) as cofactor.

It is found in the periplasm. The catalysed reaction is a beta-lactam + H2O = a substituted beta-amino acid. With respect to regulation, inhibited by chelating agents such as EDTA. In terms of biological role, confers resistance to the different beta-lactams antibiotics (penicillin, cephalosporin and carbapenem) via the hydrolysis of the beta-lactam ring. Benzylpenicillin is a better substrate than cephalosporin C and ampicillin. The protein is Metallo-beta-lactamase type 2 of Bacillus cereus.